The following is a 5654-amino-acid chain: Mucin-5AC (5654 aa).

The signal sequence occupies residues 1 to 27; that stretch reads MSVGRRKLALLWALALALACTRHTGHA. The interval 27–49 is disordered; it reads AQDGSSESSYKHHPALSPIARGP. In terms of domain architecture, VWFD 1 spans 79–249; that stretch reads RVCSTWGSFH…KMDDPTDQCQ (171 aa). Disulfide bonds link C81–C211 and C103–C248. E198 is a binding site for Cu(2+). N-linked (GlcNAc...) asparagine glycans are attached at residues N205 and N258. Cu(2+) contacts are provided by H320 and H367. The TIL 1 domain occupies 338–394; that stretch reads CPNNMQYHECRSPCADTCSNQEHSRACEDHCVAGCFCPEGTVLDDIGQTGCVPVSKC. The VWFC 1 domain occupies 394-465; the sequence is CACVYNGAAY…CSYVLTKPCD (72 aa). Residue N415 is glycosylated (N-linked (GlcNAc...) asparagine). The VWFD 2 domain occupies 432 to 607; that stretch reads GTCSVLGGAH…NTFKTQAACP (176 aa). 3 disulfide bridges follow: C434–C571, C456–C606, and C478–C486. Residue N524 is glycosylated (N-linked (GlcNAc...) asparagine). 2 TIL domains span residues 704–761 and 818–863; these read CPKS…ASNC and DTGA…AEDC. Residues 901–1072 enclose the VWFD 3 domain; the sequence is ATCAVYGDGH…NSWKLSPSCP (172 aa). 4 disulfide bridges follow: C903–C1036, C925–C1071, C934–C1033, and C953–C960. N1308 is a glycosylation site (N-linked (GlcNAc...) asparagine). Positions 1336–1377 are disordered; the sequence is LVVSSTHTPSNGPSSAHTGPPSSAWPTTAGTSPRTRLPTASA. Residues 1338–1377 are compositionally biased toward polar residues; the sequence is VSSTHTPSNGPSSAHTGPPSSAWPTTAGTSPRTRLPTASA. The Cys-rich subdomain 1 repeat unit spans residues 1383–1481; the sequence is CGEKCLWSPW…RVQCCTPLPC (99 aa). The segment at 1383 to 4731 is 9 X Cys-rich subdomain repeats; sequence CGEKCLWSPW…VLCCETPRGC (3349 aa). C-linked (Man) tryptophan glycosylation occurs at W1389. 2 stretches are compositionally biased toward low complexity: residues 1483 to 1539 and 1547 to 1575; these read TSSS…TFST and ATST…PSTS. The segment at 1483–1575 is disordered; sequence TSSSPAQTTP…KPTPTEPSTS (93 aa). A Cys-rich subdomain 2 repeat occupies 1577–1677; sequence CLQELCTWTE…IQCCETVNVC (101 aa). W1584 is a glycosylation site (C-linked (Man) tryptophan). Residues 1688-1733 form a disordered region; it reads ATTRPTPHPTGAQTQTTFTTHMPSASTEQPTATSRGGPTATSVTQG. Low complexity predominate over residues 1697-1707; the sequence is TGAQTQTTFTT. The span at 1708-1733 shows a compositional bias: polar residues; the sequence is HMPSASTEQPTATSRGGPTATSVTQG. The Cys-rich subdomain 3 repeat unit spans residues 1743-1847; that stretch reads CHPRCTWTKW…VLCCETPRGC (105 aa). C-linked (Man) tryptophan glycosylation is present at W1749. Residues 1849 to 1948 form a disordered region; sequence MTSTPGSTSS…KPTPTEPSTS (100 aa). Composition is skewed to low complexity over residues 1850–1912 and 1920–1948; these read TSTP…TFST and ATST…PSTS. The Cys-rich subdomain 4 repeat unit spans residues 1950-2050; sequence CLQELCTWTE…IQCCETVNVC (101 aa). W1957 carries C-linked (Man) tryptophan glycosylation. Positions 2059–2110 are disordered; that stretch reads TVATTRPTPHPTGAQTQTTFTTHMPSASTEQPTATSRGGPTATSVTQGTHTT. A compositionally biased stretch (low complexity) spans 2070–2080; it reads TGAQTQTTFTT. The span at 2081-2110 shows a compositional bias: polar residues; it reads HMPSASTEQPTATSRGGPTATSVTQGTHTT. The Cys-rich subdomain 5 repeat unit spans residues 2116–2220; the sequence is CHPRCTWTTW…VLCCETPKGC (105 aa). A glycan (C-linked (Man) tryptophan) is linked at W2122. The segment covering 2224 to 2234 has biased composition (low complexity); the sequence is STPVTAPSTPS. The segment at 2224 to 3214 is disordered; that stretch reads STPVTAPSTP…SHVSISKTTH (991 aa). Residues 2235 to 2249 show a composition bias toward polar residues; sequence GRATSPTQSTSSWQK. 2 stretches are compositionally biased toward low complexity: residues 2250–3184 and 3192–3214; these read SRTT…TPGP and PTTS…KTTH. The interval 2257-3200 is 107 X 8 AA approximate tandem repeats of T-T-S-T-T-S-A-P; that stretch reads TTSTTSTPQT…VPTTSTASVS (944 aa). 16 O-linked (GalNAc) threonine glycosylation sites follow: T2395, T2405, T2451, T2461, T2531, T2541, T2571, T2581, T2699, T2709, T2883, T2893, T2979, T2989, T3067, and T3077. One copy of the Cys-rich subdomain 6 repeat lies at 3222-3326; it reads CHLRCTWTKW…VLCCETPKGC (105 aa). A glycan (C-linked (Man) tryptophan) is linked at W3228. Positions 3329–3340 are enriched in low complexity; it reads TSTPVTAPSTPS. The interval 3329 to 3515 is disordered; it reads TSTPVTAPST…SVSKTTHSQP (187 aa). Residues 3341–3355 are compositionally biased toward polar residues; it reads GRATSPTQSTSSWQK. Residues 3356 to 3513 are compositionally biased toward low complexity; that stretch reads SRTTTLVTTS…HVSVSKTTHS (158 aa). Positions 3363–3498 are 17 X 8 AA approximate tandem repeats of T-T-S-T-T-S-A-P; the sequence is TTSTTSTPQT…VTTTSTASVS (136 aa). One copy of the Cys-rich subdomain 7 repeat lies at 3520–3660; that stretch reads CHPRCTWTKW…WQKSRTTTLV (141 aa). W3526 is a glycosylation site (C-linked (Man) tryptophan). Residues 3628–3638 show a composition bias toward low complexity; it reads STSVTAPSTPS. Residues 3628–3951 form a disordered region; it reads STSVTAPSTP…KTTHSQPVTR (324 aa). The span at 3639-3660 shows a compositional bias: polar residues; it reads GRATSPTQSTSSWQKSRTTTLV. A 34 X 8 AA approximate tandem repeats of T-T-S-T-T-S-A-P region spans residues 3661–3931; the sequence is TSSITSTTQT…VPTTSTASVS (271 aa). Residues 3661 to 3946 are compositionally biased toward low complexity; it reads TSSITSTTQT…HVSVSKTTHS (286 aa). An N-linked (GlcNAc...) asparagine glycan is attached at N3774. A Cys-rich subdomain 8 repeat occupies 3953-4057; it reads CHPRCTWTKW…VLCCETPKGC (105 aa). A C-linked (Man) tryptophan glycan is attached at W3959. Positions 4060–4071 are enriched in low complexity; that stretch reads TSTPVTAPSTPS. Residues 4060 to 4625 form a disordered region; the sequence is TSTPVTAPST…KTTHSQPVTS (566 aa). Positions 4072 to 4088 are enriched in polar residues; sequence GRATSPTQSTSSWQKSR. Over residues 4089–4610 the composition is skewed to low complexity; sequence TTTLVTTSTT…TTPVSKTSTS (522 aa). Positions 4093–4595 are 58 X 8 AA approximate tandem repeats of T-T-S-T-T-S-A-P; the sequence is VTTSTTSTPQ…TSGPGTTPSP (503 aa). O-linked (GalNAc) threonine glycans are attached at residues T4224, T4234, T4296, T4306, T4320, T4330, T4376, T4386, T4440, T4450, T4480, T4490, T4512, T4522, T4568, and T4578. The segment covering 4611–4624 has biased composition (polar residues); sequence HLSVSKTTHSQPVT. The stretch at 4627-4731 is one Cys-rich subdomain 9 repeat; the sequence is CHPLCAWTKW…VLCCETPRGC (105 aa). C-linked (Man) tryptophan glycosylation occurs at W4633. The disordered stretch occupies residues 4830 to 4849; it reads TLPPAPATSPSISTSEPVTE. Positions 4852–4918 constitute a VWFC 2 domain; sequence CPNAVPPRKK…DGCCHHYQCQ (67 aa). N-linked (GlcNAc...) asparagine glycans are attached at residues N4869 and N4942. The VWFD 4 domain maps to 4919–5103; sequence CVCSGWGDPH…VSIPDQPACH (185 aa). Disulfide bonds link C4921–C5063, C4943–C5102, and C4967–C4975. N-linked (GlcNAc...) asparagine glycosylation is found at N5057, N5093, and N5236. Residues 5276 to 5345 enclose the VWFC 3 domain; that stretch reads PRCLGPHGEP…GQCCPQYSCA (70 aa). 5 N-linked (GlcNAc...) asparagine glycosylation sites follow: N5347, N5377, N5386, N5455, and N5528. In terms of domain architecture, VWFC 4 spans 5381-5448; sequence TVCSINGTLY…QSGQCCGTCV (68 aa). 4 disulfides stabilise this stretch: C5532/C5582, C5546/C5596, C5557/C5612, and C5561/C5614. Positions 5532–5620 constitute a CTCK domain; it reads CAVYHRSLII…ECGCMGRRCP (89 aa). N5591 carries an N-linked (GlcNAc...) asparagine glycan. The interval 5622 to 5654 is disordered; that stretch reads PGDTQHSEEAEPEPSQEAESGSWERGVPVSPMH.

Homomultimer; disulfide-linked. The N- and C-terminus mediate their assembly into higher order structures to form filaments. The CTCK domains of two polypeptides associate in the endoplasmic reticulum to generate intermolecularly disulfide-bonded dimers. These dimers progress to the Golgi apparatus, which is a more acidic environment than the endoplasmic reticulum. Under acidic conditions, the N-termini form non-covalent intermolecular interactions that juxtapose assemblies from different CTCK-linked dimers to produce long, disulfide-linked polymers that remain highly compact until secretion. Post-translationally, C-, O- and N-glycosylated. O-glycosylated on the second and last Thr of the Thr-/Ser-rich tandem repeats TTPSPVPTTSTTSA. One form of glycosylation is also known as Lewis B (LeB) blood group antigen, a tetrasaccharide consisting of N-acetylglucosamine having a fucosyl residue attached. It has a role as an epitope and antigen and functions as a receptor for H.pylori binding and facilitates infection. C-mannosylation in the Cys-rich subdomains may be required for proper folding of these regions and for export from the endoplasmic reticulum during biosynthesis. In terms of processing, proteolytic cleavage in the C-terminal is initiated early in the secretory pathway and does not involve a serine protease. The extent of cleavage is increased in the acidic parts of the secretory pathway. Cleavage generates a reactive group which could link the protein to a primary amide. In terms of tissue distribution, highly expressed in surface mucosal cells of respiratory tract and stomach epithelia. Overexpressed in a number of carcinomas. Also expressed in Barrett's esophagus epithelium and in the proximal duodenum.

The protein resides in the secreted. Gel-forming glycoprotein of gastric and respiratory tract epithelia that protects the mucosa from infection and chemical damage by binding to inhaled microorganisms and particles that are subsequently removed by the mucociliary system. Interacts with H.pylori in the gastric epithelium, Barrett's esophagus as well as in gastric metaplasia of the duodenum (GMD). This Homo sapiens (Human) protein is Mucin-5AC.